A 1350-amino-acid polypeptide reads, in one-letter code: Protein transport protein SEC16A homolog (1350 aa).

5 disordered regions span residues 26–45 (YTPTASSSAKELKFDDGSDS), 73–97 (LGNDVANEGTSGSVGKEEPSSSIAP), 964–1063 (MPPP…TRKV), 1118–1216 (AEEA…KPPI), and 1235–1350 (QVME…EVEL). Residues 35–45 (KELKFDDGSDS) are compositionally biased toward basic and acidic residues. Phosphoserine is present on S43. Polar residues predominate over residues 970–1002 (HSTTGNPQVNEYQHQQQEAAKLSYSQSANTMSS). Over residues 1150-1168 (SPSSGSWSSGSPTPSENSP) the composition is skewed to low complexity. Composition is skewed to polar residues over residues 1195–1210 (TYNQGSSSMYQSPPVQ) and 1289–1316 (RSGSGTSLNGDLPQSVSRRTASWSGSVN). Low complexity predominate over residues 1317–1343 (SSSFMSPTSASTFRPSPLNSSSSSLGE).

This sequence belongs to the SEC16 family. Interacts with SEC13A, SEC13B and SEC31A.

Its subcellular location is the golgi apparatus. The protein localises to the golgi stack. The protein resides in the endoplasmic reticulum. Its function is as follows. Required for efficient protein export from the endoplasmic reticulum (ER) to the Golgi by regulating COPII coat dynamics at the ER. Functions as a scaffold and regulator of COPII coat assembly at ER exit sites. This Arabidopsis thaliana (Mouse-ear cress) protein is Protein transport protein SEC16A homolog.